Consider the following 36-residue polypeptide: Amanexitide proprotein 1 (36 aa).

The propeptide occupies 1–10 (MSDINTARLP). A cross-link (cyclopeptide (Val-Pro)) is located at residues 11 to 19 (VFSLPVFFP). Residues 20-36 (FVSDDIQAVLTRGESLC) constitute a propeptide that is removed on maturation.

Belongs to the MSDIN fungal toxin family. In terms of processing, processed by the macrocyclase-peptidase enzyme POPB to yield a toxic cyclic nonapeptide. POPB first removes 10 residues from the N-terminus. Conformational trapping of the remaining peptide forces the enzyme to release this intermediate rather than proceed to macrocyclization. The enzyme rebinds the remaining peptide in a different conformation and catalyzes macrocyclization of the N-terminal 9 residues. Expressed in basidiocarps.

Functionally, cyclic nonapeptide that belongs to the MSDIN-like toxin family responsible for a large number of food poisoning cases and deaths. The chain is Amanexitide proprotein 1 from Amanita exitialis (Guangzhou destroying angel).